The following is a 981-amino-acid chain: Ubiquitin carboxyl-terminal hydrolase 37 (981 aa).

The KEN box 1 signature appears at 32–34; the sequence is KEN. Short sequence motifs (D-box) lie at residues 71 to 79 and 96 to 105; these read RLMLTLQDN and RLFLDAVHQN. Residues 111–308 are disordered; it reads MKPSQGSGSF…SAKRSLGFLP (198 aa). Serine 114 carries the phosphoserine modification. Residues 135-148 show a composition bias toward polar residues; it reads RQLSYSDNQASSKR. Basic and acidic residues predominate over residues 149–159; it reads GSLETKDDIPF. Residues 160–168 carry the D-box 3 motif; it reads RKVLGNPGR. Phosphoserine is present on serine 170. Over residues 172–195 the composition is skewed to polar residues; the sequence is KTATGSGITVTRTIPSLTSASTPL. A Phosphoserine modification is found at serine 212. The KEN box 2 motif lies at 223 to 225; it reads KEN. The span at 245-259 shows a compositional bias: basic and acidic residues; it reads SREKQLSLKQSEENR. Polar residues predominate over residues 266 to 300; sequence LQSSSFYGSRTGSKDYSSGSTNLDRTNVSGQTPSA. Residues 343-953 form the USP domain; it reads QGFSNLGNTC…SGYIFFYMHK (611 aa). Residue cysteine 352 is the Nucleophile of the active site. The residue at position 630 (serine 630) is a Phosphoserine; by CDK2. Residues serine 652 and serine 654 each carry the phosphoserine modification. 2 disordered regions span residues 673–704 and 719–831; these read GCEQ…GFDG and KREA…EQKE. Composition is skewed to basic and acidic residues over residues 683 to 697 and 719 to 734; these read KDSK…KSEL and KREA…DDKP. Residues 706–725 enclose the UIM 1 domain; sequence SEEELLAAVLEMSKREASPT. The residue at position 772 (serine 772) is a Phosphoserine. Over residues 776–788 the composition is skewed to basic and acidic residues; it reads ITKDCDENKENKT. The KEN box 3 signature appears at 784–786; it reads KEN. UIM domains lie at 808 to 827 and 830 to 849; these read REEQ…QEAW and KEDD…FNNS. Positions 813–824 are enriched in low complexity; sequence LQQALAQSLQEQ. The active-site Proton acceptor is histidine 908.

Belongs to the peptidase C19 family. Interacts with FZR1/CDH1. Interacts with CDT1. Polyubiquitinated via 'Lys-11'-linked ubiquitin by the APC(CDH1) complex during late mitosis, leading to its degradation. Able to mediate auto-deubiquitination. Post-translationally, phosphorylated at Ser-630 by CDK2 during G1/S phase but not during mitosis; phosphorylation at Ser-630 is required for deubiquitinase activity. Also polyubiquitinated during early G1 phase, without leading to degradation. Phosphorylated at Ser-114 by ATM following DNA damage, which in turn increases its deubiquitination activity towards BLM.

It is found in the nucleus. The protein resides in the chromosome. The enzyme catalyses Thiol-dependent hydrolysis of ester, thioester, amide, peptide and isopeptide bonds formed by the C-terminal Gly of ubiquitin (a 76-residue protein attached to proteins as an intracellular targeting signal).. In terms of biological role, deubiquitinase that plays a role in different processes including cell cycle regulation, DNA replication or DNA damage response. Antagonizes the anaphase-promoting complex (APC/C) during G1/S transition by mediating deubiquitination of cyclin-A (CCNA1 and CCNA2), thereby promoting S phase entry. Specifically mediates deubiquitination of 'Lys-11'-linked polyubiquitin chains, a specific ubiquitin-linkage type mediated by the APC/C complex. Phosphorylation at Ser-628 during G1/S phase maximizes the deubiquitinase activity, leading to prevent degradation of cyclin-A (CCNA1 and CCNA2). Plays an important role in the regulation of DNA replication by stabilizing the licensing factor CDT1. Also plays an essential role beyond S-phase entry to promote the efficiency and fidelity of replication by deubiquitinating checkpoint kinase 1/CHK1, promoting its stability. Sustains the DNA damage response (DDR) by deubiquitinating and stabilizing the ATP-dependent DNA helicase BLM. Mechanistically, DNA double-strand breaks (DSB) promotes ATM-mediated phosphorylation of USP37 and enhances the binding between USP37 and BLM. Promotes cell migration by deubiquitinating and stabilizing the epithelial-mesenchymal transition (EMT)-inducing transcription factor SNAI. Plays a role in the regulation of mitotic spindle assembly and mitotic progression by associating with chromatin-associated WAPL and stabilizing it through deubiquitination. This chain is Ubiquitin carboxyl-terminal hydrolase 37 (USP37), found in Canis lupus familiaris (Dog).